The following is a 126-amino-acid chain: Histone H2B type 1-K (126 aa).

Residues 1 to 12 show a composition bias toward low complexity; that stretch reads MPEPAKSAPAPK. The tract at residues 1–36 is disordered; it reads MPEPAKSAPAPKKGSKKAVTKAQKKDGKKRKRSRKE. At P2 the chain carries N-acetylproline. An ADP-ribosyl glutamic acid modification is found at E3. K6 is modified (N6-(2-hydroxyisobutyryl)lysine; alternate). Residue K6 is modified to N6-(beta-hydroxybutyryl)lysine; alternate. K6 carries the N6-acetyllysine; alternate modification. N6-butyryllysine; alternate is present on K6. K6 is subject to N6-crotonyllysine; alternate. The residue at position 6 (K6) is an N6-lactoyllysine; alternate. A Glycyl lysine isopeptide (Lys-Gly) (interchain with G-Cter in SUMO2); alternate cross-link involves residue K6. ADP-ribosylserine is present on S7. K12 carries the N6-(beta-hydroxybutyryl)lysine; alternate modification. K12 and K13 each carry N6-acetyllysine; alternate. Residues K12 and K13 each carry the N6-crotonyllysine; alternate modification. K12 carries the post-translational modification N6-lactoyllysine; alternate. K13 is subject to N6-(2-hydroxyisobutyryl)lysine; alternate. A Phosphoserine; by STK4/MST1 modification is found at S15. K16, K17, K21, and K24 each carry N6-acetyllysine; alternate. An N6-crotonyllysine; alternate mark is found at K16, K17, K21, and K24. An N6-lactoyllysine; alternate mark is found at K16, K17, K21, and K24. N6-(beta-hydroxybutyryl)lysine; alternate is present on residues K17 and K21. K17 bears the N6-glutaryllysine; alternate mark. 2 positions are modified to N6-(2-hydroxyisobutyryl)lysine; alternate: K21 and K24. K21 is subject to N6-butyryllysine; alternate. Residue K21 forms a Glycyl lysine isopeptide (Lys-Gly) (interchain with G-Cter in SUMO2); alternate linkage. An N6-(2-hydroxyisobutyryl)lysine modification is found at K25. K35 carries the N6-(2-hydroxyisobutyryl)lysine; alternate modification. An N6-(beta-hydroxybutyryl)lysine; alternate modification is found at K35. Position 35 is an N6-crotonyllysine; alternate (K35). K35 bears the N6-glutaryllysine; alternate mark. K35 bears the N6-succinyllysine; alternate mark. Residue K35 forms a Glycyl lysine isopeptide (Lys-Gly) (interchain with G-Cter in ubiquitin); alternate linkage. Position 36 is a polyADP-ribosyl glutamic acid (E36). S37 carries the post-translational modification Phosphoserine; by AMPK. 3 positions are modified to N6-(2-hydroxyisobutyryl)lysine; alternate: K44, K47, and K58. At K44 the chain carries N6-lactoyllysine; alternate. Residues K44 and K47 each carry the N6-glutaryllysine; alternate modification. The residue at position 47 (K47) is an N6-methyllysine; alternate. An N6,N6-dimethyllysine; alternate modification is found at K58. Position 80 is a dimethylated arginine (R80). N6-(2-hydroxyisobutyryl)lysine; alternate is present on K86. Position 86 is an N6-(beta-hydroxybutyryl)lysine; alternate (K86). N6-acetyllysine; alternate is present on K86. Residue K86 is modified to N6-lactoyllysine; alternate. An N6,N6,N6-trimethyllysine; alternate modification is found at K86. R87 and R93 each carry omega-N-methylarginine. K109 is modified (N6-(2-hydroxyisobutyryl)lysine; alternate). K109 carries the N6-lactoyllysine; alternate modification. Residue K109 is modified to N6-glutaryllysine; alternate. N6-methyllysine; alternate is present on K109. The O-linked (GlcNAc) serine glycan is linked to S113. The residue at position 116 (T116) is a Phosphothreonine. 2 positions are modified to N6-(2-hydroxyisobutyryl)lysine; alternate: K117 and K121. N6-(beta-hydroxybutyryl)lysine; alternate occurs at positions 117 and 121. An N6-lactoyllysine; alternate mark is found at K117 and K121. K117 and K121 each carry N6-glutaryllysine; alternate. N6-succinyllysine; alternate occurs at positions 117 and 121. The residue at position 117 (K117) is an N6-malonyllysine; alternate. Residue K117 is modified to N6-methylated lysine; alternate. Residue K121 forms a Glycyl lysine isopeptide (Lys-Gly) (interchain with G-Cter in ubiquitin); alternate linkage.

The protein belongs to the histone H2B family. In terms of assembly, the nucleosome is a histone octamer containing two molecules each of H2A, H2B, H3 and H4 assembled in one H3-H4 heterotetramer and two H2A-H2B heterodimers. The octamer wraps approximately 147 bp of DNA. Monoubiquitination at Lys-35 (H2BK34Ub) by the MSL1/MSL2 dimer is required for histone H3 'Lys-4' (H3K4me) and 'Lys-79' (H3K79me) methylation and transcription activation at specific gene loci, such as HOXA9 and MEIS1 loci. Similarly, monoubiquitination at Lys-121 (H2BK120Ub) by the RNF20/40 complex gives a specific tag for epigenetic transcriptional activation and is also prerequisite for histone H3 'Lys-4' and 'Lys-79' methylation. It also functions cooperatively with the FACT dimer to stimulate elongation by RNA polymerase II. H2BK120Ub also acts as a regulator of mRNA splicing: deubiquitination by USP49 is required for efficient cotranscriptional splicing of a large set of exons. In terms of processing, phosphorylation at Ser-37 (H2BS36ph) by AMPK in response to stress promotes transcription. Phosphorylated on Ser-15 (H2BS14ph) by STK4/MST1 during apoptosis; which facilitates apoptotic chromatin condensation. Also phosphorylated on Ser-15 in response to DNA double strand breaks (DSBs), and in correlation with somatic hypermutation and immunoglobulin class-switch recombination. Post-translationally, glcNAcylation at Ser-113 promotes monoubiquitination of Lys-121. It fluctuates in response to extracellular glucose, and associates with transcribed genes. ADP-ribosylated by PARP1 or PARP2 on Ser-7 (H2BS6ADPr) in response to DNA damage. H2BS6ADPr promotes recruitment of CHD1L. Mono-ADP-ribosylated on Glu-3 (H2BE2ADPr) by PARP3 in response to single-strand breaks. Poly ADP-ribosylation on Glu-36 (H2BE35ADPr) by PARP1 regulates adipogenesis: it inhibits phosphorylation at Ser-37 (H2BS36ph), thereby blocking expression of pro-adipogenetic genes. In terms of processing, crotonylation (Kcr) is specifically present in male germ cells and marks testis-specific genes in post-meiotic cells, including X-linked genes that escape sex chromosome inactivation in haploid cells. Crotonylation marks active promoters and enhancers and confers resistance to transcriptional repressors. It is also associated with post-meiotically activated genes on autosomes. Post-translationally, lactylated in macrophages by EP300/P300 by using lactoyl-CoA directly derived from endogenous or exogenous lactate, leading to stimulates gene transcription.

The protein resides in the nucleus. Its subcellular location is the chromosome. Its function is as follows. Core component of nucleosome. Nucleosomes wrap and compact DNA into chromatin, limiting DNA accessibility to the cellular machineries which require DNA as a template. Histones thereby play a central role in transcription regulation, DNA repair, DNA replication and chromosomal stability. DNA accessibility is regulated via a complex set of post-translational modifications of histones, also called histone code, and nucleosome remodeling. Has broad antibacterial activity. May contribute to the formation of the functional antimicrobial barrier of the colonic epithelium, and to the bactericidal activity of amniotic fluid. In Homo sapiens (Human), this protein is Histone H2B type 1-K.